The primary structure comprises 300 residues: DNA packaging protein OPG160 (300 aa).

Belongs to the orthopoxvirus OPG160 protein family. In terms of assembly, interacts with protein OPG137.

In terms of biological role, participates in viral DNA packaging and virion morphogenesis. This is DNA packaging protein OPG160 (OPG160) from Monkeypox virus.